We begin with the raw amino-acid sequence, 329 residues long: Glycerol-3-phosphate dehydrogenase [NAD(P)+] (329 aa).

NADPH-binding residues include Trp15, His35, and Lys107. Sn-glycerol 3-phosphate is bound by residues Lys107, Gly135, and Ser137. Ala139 is an NADPH binding site. Positions 190, 243, 253, 254, and 255 each coordinate sn-glycerol 3-phosphate. Residue Lys190 is the Proton acceptor of the active site. Position 254 (Arg254) interacts with NADPH. Residues Leu276 and Glu278 each coordinate NADPH.

The protein belongs to the NAD-dependent glycerol-3-phosphate dehydrogenase family.

Its subcellular location is the cytoplasm. It carries out the reaction sn-glycerol 3-phosphate + NAD(+) = dihydroxyacetone phosphate + NADH + H(+). The catalysed reaction is sn-glycerol 3-phosphate + NADP(+) = dihydroxyacetone phosphate + NADPH + H(+). It participates in membrane lipid metabolism; glycerophospholipid metabolism. In terms of biological role, catalyzes the reduction of the glycolytic intermediate dihydroxyacetone phosphate (DHAP) to sn-glycerol 3-phosphate (G3P), the key precursor for phospholipid synthesis. This chain is Glycerol-3-phosphate dehydrogenase [NAD(P)+], found in Rhodopseudomonas palustris (strain BisB5).